Consider the following 426-residue polypeptide: Glutamate-1-semialdehyde 2,1-aminomutase (426 aa).

An N6-(pyridoxal phosphate)lysine modification is found at K265.

It belongs to the class-III pyridoxal-phosphate-dependent aminotransferase family. HemL subfamily. As to quaternary structure, homodimer. The cofactor is pyridoxal 5'-phosphate.

It localises to the cytoplasm. The catalysed reaction is (S)-4-amino-5-oxopentanoate = 5-aminolevulinate. Its pathway is porphyrin-containing compound metabolism; protoporphyrin-IX biosynthesis; 5-aminolevulinate from L-glutamyl-tRNA(Glu): step 2/2. This Salmonella typhimurium (strain SL1344) protein is Glutamate-1-semialdehyde 2,1-aminomutase (hemL).